A 734-amino-acid chain; its full sequence is Origin of replication complex subunit 3 (734 aa).

Disordered stretches follow at residues 1 to 25 (MAPSGTVADPPQCSTTDSFNSSDTA) and 532 to 554 (GQRQGLPNSPKKHASRSNSKLEK). Positions 12–24 (QCSTTDSFNSSDT) are enriched in polar residues.

This sequence belongs to the ORC3 family. Component of the origin recognition complex (ORC) composed of at least ORC1 (ORC1A or ORC1B), ORC2, ORC3, ORC4, ORC5 and ORC6. ORC is regulated in a cell-cycle and development dependent manner. It is sequentially assembled at the exit from anaphase of mitosis and disassembled as cells enter S phase. Interacts directly with ORC1A, ORC2, ORC4, ORC5 and ORC6. In terms of tissue distribution, follow a cell-cycle regulation with a peak at the G1/S-phase. Mostly expressed in siliques and flowers, and, to a lower exent, in flower buds, leaves, roots and stems.

The protein resides in the nucleus. Functionally, component of the origin recognition complex (ORC) that binds origins of replication. DNA-binding is ATP-dependent. The specific DNA sequences that define origins of replication have not been identified yet. The polypeptide is Origin of replication complex subunit 3 (Arabidopsis thaliana (Mouse-ear cress)).